A 549-amino-acid polypeptide reads, in one-letter code: Undecaprenyl phosphate-alpha-4-amino-4-deoxy-L-arabinose arabinosyl transferase (549 aa).

Helical transmembrane passes span 9 to 29 (LLLI…GLWI), 80 to 100 (LFGV…LAYL), 112 to 132 (SLAC…SGYA), 136 to 156 (PQFT…LDAG), 166 to 186 (ILLG…AWLL), 204 to 224 (LLGY…PWAL), 256 to 276 (PWWF…GLLP), 288 to 308 (QAPV…FSLS), 312 to 332 (LPTY…HALV), 346 to 366 (NGLL…YLQL), 376 to 396 (FELF…LAQW), and 402 to 422 (AWAA…AAMP).

The protein belongs to the glycosyltransferase 83 family.

Its subcellular location is the cell inner membrane. The enzyme catalyses 4-amino-4-deoxy-alpha-L-arabinopyranosyl di-trans,octa-cis-undecaprenyl phosphate + lipid IVA = lipid IIA + di-trans,octa-cis-undecaprenyl phosphate.. Its pathway is lipopolysaccharide metabolism; 4-amino-4-deoxy-beta-L-arabinose-lipid A biosynthesis. Catalyzes the transfer of the L-Ara4N moiety of the glycolipid undecaprenyl phosphate-alpha-L-Ara4N to lipid A. The modified arabinose is attached to lipid A and is required for resistance to polymyxin and cationic antimicrobial peptides. The protein is Undecaprenyl phosphate-alpha-4-amino-4-deoxy-L-arabinose arabinosyl transferase of Pseudomonas aeruginosa (strain UCBPP-PA14).